We begin with the raw amino-acid sequence, 227 residues long: ATP-dependent dethiobiotin synthetase BioD (227 aa).

13-18 (DAGKTT) lines the ATP pocket. A Mg(2+)-binding site is contributed by threonine 17. Lysine 38 is a catalytic residue. Residues aspartate 55, 118-121 (EGAG), 178-179 (NR), 207-209 (PYI), and glutamate 214 each bind ATP. The Mg(2+) site is built by aspartate 55 and glutamate 118.

It belongs to the dethiobiotin synthetase family. Homodimer. Mg(2+) is required as a cofactor.

It is found in the cytoplasm. It catalyses the reaction (7R,8S)-7,8-diammoniononanoate + CO2 + ATP = (4R,5S)-dethiobiotin + ADP + phosphate + 3 H(+). The protein operates within cofactor biosynthesis; biotin biosynthesis; biotin from 7,8-diaminononanoate: step 1/2. Its function is as follows. Catalyzes a mechanistically unusual reaction, the ATP-dependent insertion of CO2 between the N7 and N8 nitrogen atoms of 7,8-diaminopelargonic acid (DAPA, also called 7,8-diammoniononanoate) to form a ureido ring. This Tolumonas auensis (strain DSM 9187 / NBRC 110442 / TA 4) protein is ATP-dependent dethiobiotin synthetase BioD.